The following is a 471-amino-acid chain: UTP--glucose-1-phosphate uridylyltransferase (471 aa).

Residues 87 to 90, K101, Q164, and G193 contribute to the UTP site; that span reads LNGG. 89 to 90 contributes to the substrate binding site; it reads GG. Substrate-binding positions include H194 and 222–224; that span reads NSD. D224 and K362 together coordinate UTP.

Belongs to the UDPGP type 1 family.

It is found in the cytoplasm. The enzyme catalyses alpha-D-glucose 1-phosphate + UTP + H(+) = UDP-alpha-D-glucose + diphosphate. In terms of biological role, plays a central role as a glucosyl donor in cellular metabolic pathways. The protein is UTP--glucose-1-phosphate uridylyltransferase of Pyrus pyrifolia (Chinese pear).